A 322-amino-acid polypeptide reads, in one-letter code: Cytochrome c biogenesis protein CcsA (322 aa).

7 helical membrane-spanning segments follow: residues 9–29 (ILTHISFSTISIVITIHLITL), 44–64 (GMIVTFFSITGFLVSRWVSSG), 68–88 (LSNLYESLIFLSWALYILHTI), 143–163 (MLLSYATLLCGSLLSAAILII), 226–246 (IISLGFTLLTIGILCGAVWAN), 260–274 (TWAFITWTIFAIYLH), and 289–309 (IASIGFLIIWICYFGINLLGI).

The protein belongs to the CcmF/CycK/Ccl1/NrfE/CcsA family. In terms of assembly, may interact with Ccs1.

The protein localises to the plastid. Its subcellular location is the chloroplast thylakoid membrane. Its function is as follows. Required during biogenesis of c-type cytochromes (cytochrome c6 and cytochrome f) at the step of heme attachment. The sequence is that of Cytochrome c biogenesis protein CcsA from Hordeum vulgare (Barley).